A 201-amino-acid chain; its full sequence is Inosine triphosphate pyrophosphatase (201 aa).

Residue 16-21 participates in ITP binding; the sequence is TGNAKK. E44 serves as a coordination point for Mg(2+). ITP-binding positions include K56, 72-73, K89, 148-151, K171, and 176-177; these read DT, FGWD, and HR.

Belongs to the HAM1 NTPase family. Homodimer. Mg(2+) serves as cofactor. It depends on Mn(2+) as a cofactor.

The protein localises to the cytoplasm. It catalyses the reaction ITP + H2O = IMP + diphosphate + H(+). It carries out the reaction dITP + H2O = dIMP + diphosphate + H(+). The catalysed reaction is XTP + H2O = XMP + diphosphate + H(+). Functionally, pyrophosphatase that hydrolyzes non-canonical purine nucleotides such as inosine triphosphate (ITP), deoxyinosine triphosphate (dITP) or xanthosine 5'-triphosphate (XTP) to their respective monophosphate derivatives. The enzyme does not distinguish between the deoxy- and ribose forms. Probably excludes non-canonical purines from RNA and DNA precursor pools, thus preventing their incorporation into RNA and DNA and avoiding chromosomal lesions. The protein is Inosine triphosphate pyrophosphatase of Zea mays (Maize).